A 342-amino-acid chain; its full sequence is Predicted GPI-anchored protein 54 (342 aa).

Residues 1–16 (MRANYLLLLAATAVQA) form the signal peptide. Asn25, Asn105, and Asn151 each carry an N-linked (GlcNAc...) asparagine glycan. Residue Gly314 is the site of GPI-anchor amidated glycine attachment. The propeptide at 315 to 342 (ASQSHPISSYSNYTISDYAPPISSYYSL) is removed in mature form. An N-linked (GlcNAc...) asparagine glycan is attached at Asn326.

The protein localises to the cell membrane. This chain is Predicted GPI-anchored protein 54 (PGA54), found in Candida albicans (strain SC5314 / ATCC MYA-2876) (Yeast).